We begin with the raw amino-acid sequence, 486 residues long: Cobyric acid synthase (486 aa).

The GATase cobBQ-type domain occupies 250–438 (AFRIVVPVPP…LHGMFDTPSA (189 aa)). Cys-331 (nucleophile) is an active-site residue. His-430 is a catalytic residue.

Belongs to the CobB/CobQ family. CobQ subfamily.

Its pathway is cofactor biosynthesis; adenosylcobalamin biosynthesis. Functionally, catalyzes amidations at positions B, D, E, and G on adenosylcobyrinic A,C-diamide. NH(2) groups are provided by glutamine, and one molecule of ATP is hydrogenolyzed for each amidation. The chain is Cobyric acid synthase from Herminiimonas arsenicoxydans.